A 1195-amino-acid polypeptide reads, in one-letter code: Chromosome partition protein Smc (1195 aa).

33-40 (PNGSGKSN) is a binding site for ATP. Coiled coils occupy residues 185-241 (GVAQ…RQEQ), 273-348 (DAAT…IQAL), and 380-528 (QYQQ…QETQ). Residues 542 to 658 (PGVHGLVAQL…FERLDQARRY (117 aa)) enclose the SMC hinge domain. Positions 698 to 1043 (GESAEVRAIR…ELLLRIENFT (346 aa)) form a coiled coil.

Belongs to the SMC family. Homodimer.

The protein localises to the cytoplasm. Functionally, required for chromosome condensation and partitioning. The chain is Chromosome partition protein Smc from Synechococcus sp. (strain ATCC 27144 / PCC 6301 / SAUG 1402/1) (Anacystis nidulans).